A 207-amino-acid polypeptide reads, in one-letter code: Uridine kinase (207 aa).

Residue 11–18 (GGSGSGKT) coordinates ATP.

This sequence belongs to the uridine kinase family.

The protein localises to the cytoplasm. It carries out the reaction uridine + ATP = UMP + ADP + H(+). It catalyses the reaction cytidine + ATP = CMP + ADP + H(+). The protein operates within pyrimidine metabolism; CTP biosynthesis via salvage pathway; CTP from cytidine: step 1/3. It participates in pyrimidine metabolism; UMP biosynthesis via salvage pathway; UMP from uridine: step 1/1. This Staphylococcus epidermidis (strain ATCC 35984 / DSM 28319 / BCRC 17069 / CCUG 31568 / BM 3577 / RP62A) protein is Uridine kinase.